The primary structure comprises 173 residues: Photosystem I assembly protein Ycf3 (173 aa).

TPR repeat units lie at residues 35–68, 72–105, and 120–153; these read AYVY…ETDP, GETL…NPKQ, and GRIA…NPGG.

It belongs to the Ycf3 family.

The protein resides in the cellular thylakoid membrane. Essential for the assembly of the photosystem I (PSI) complex. May act as a chaperone-like factor to guide the assembly of the PSI subunits. The polypeptide is Photosystem I assembly protein Ycf3 (Synechococcus sp. (strain CC9902)).